The chain runs to 209 residues: Protein-L-isoaspartate O-methyltransferase (209 aa).

Ser55 is a catalytic residue.

It belongs to the methyltransferase superfamily. L-isoaspartyl/D-aspartyl protein methyltransferase family.

Its subcellular location is the cytoplasm. It carries out the reaction [protein]-L-isoaspartate + S-adenosyl-L-methionine = [protein]-L-isoaspartate alpha-methyl ester + S-adenosyl-L-homocysteine. Its function is as follows. Catalyzes the methyl esterification of L-isoaspartyl residues in peptides and proteins that result from spontaneous decomposition of normal L-aspartyl and L-asparaginyl residues. It plays a role in the repair and/or degradation of damaged proteins. This is Protein-L-isoaspartate O-methyltransferase from Anaeromyxobacter dehalogenans (strain 2CP-C).